Here is a 356-residue protein sequence, read N- to C-terminus: Arginine kinase Lit v 2.0101 (356 aa).

Residues 9 to 91 (KLEAGFKKLE…FDPIIEDYHV (83 aa)) enclose the Phosphagen kinase N-terminal domain. 64–68 (GVGIY) lines the L-arginine pocket. One can recognise a Phosphagen kinase C-terminal domain in the interval 119–356 (FVISTRVRCG…LELIKIEKEM (238 aa)). Residues 122–126 (STRVR) and H185 contribute to the ATP site. E225 contacts L-arginine. R229 is a binding site for ATP. Residue C271 participates in L-arginine binding. ATP-binding positions include 280 to 284 (RASVH) and 309 to 314 (RGTRGE). E314 is a binding site for L-arginine.

Belongs to the ATP:guanido phosphotransferase family. In terms of assembly, monomer. As to expression, muscle (at protein level).

The catalysed reaction is L-arginine + ATP = N(omega)-phospho-L-arginine + ADP + H(+). It carries out the reaction dTDP + ATP = dTTP + ADP. Catalyzes the reversible transfer of high energy ATP gamma-phosphate group to L-arginine. Has nucleoside diphosphate kinase-like activity toward dTDP. Binds and phosphorylates dTDP using ATP as a phosphate donor. Does not phosphorylate dADP, dCDP, dGDP, dTMP or thymidine. This is Arginine kinase Lit v 2.0101 from Penaeus vannamei (Whiteleg shrimp).